The chain runs to 247 residues: Myeloid leukemia factor 2 (247 aa).

Positions 122–247 (ETSEMRSAPG…PSRQSRRYDW (126 aa)) are disordered. Positions 134-144 (RETRRTVRDSD) are enriched in basic and acidic residues. The span at 154 to 169 (HHIRDRAHILQRSRNH) shows a compositional bias: basic residues. Over residues 170–179 (RTGDQEERQD) the composition is skewed to basic and acidic residues. A compositionally biased stretch (acidic residues) spans 182-192 (NLDESEAAAFD). Positions 193 to 225 (DEWRRETSRYRQQRPLEFRRHEASVGGGRRAEG) are enriched in basic and acidic residues. Phosphoserine occurs at positions 216, 237, and 239.

This sequence belongs to the MLF family.

The protein localises to the cytoplasm. It localises to the nucleus. The sequence is that of Myeloid leukemia factor 2 (Mlf2) from Mus musculus (Mouse).